Reading from the N-terminus, the 571-residue chain is Oxysterol-binding protein 11 (571 aa).

Positions 1 to 73 (MSNFFKKLVK…IGEQIDTLDD (73 aa)) are disordered. The span at 33-42 (NGNQVVPDTA) shows a compositional bias: polar residues. A compositionally biased stretch (low complexity) spans 43 to 54 (SSYSDDSNSLSD). Residues 387–420 (YLEREENKLANKEKNKIEEREREKRKTRESRKEI) are a coiled coil.

It belongs to the OSBP family.

The sequence is that of Oxysterol-binding protein 11 (osbK) from Dictyostelium discoideum (Social amoeba).